We begin with the raw amino-acid sequence, 490 residues long: Glutamate--tRNA ligase (490 aa).

The 'HIGH' region motif lies at 12 to 22 (PSPTGTPHVGL). The 'KMSKS' region signature appears at 256–260 (KLSKR). Lys259 provides a ligand contact to ATP.

It belongs to the class-I aminoacyl-tRNA synthetase family. Glutamate--tRNA ligase type 1 subfamily. Monomer.

The protein resides in the cytoplasm. It catalyses the reaction tRNA(Glu) + L-glutamate + ATP = L-glutamyl-tRNA(Glu) + AMP + diphosphate. Catalyzes the attachment of glutamate to tRNA(Glu) in a two-step reaction: glutamate is first activated by ATP to form Glu-AMP and then transferred to the acceptor end of tRNA(Glu). In Mycobacterium sp. (strain KMS), this protein is Glutamate--tRNA ligase.